The following is a 799-amino-acid chain: Protein translocase subunit SecA 1 (799 aa).

ATP is bound by residues glutamine 85, 103–107, and aspartate 504; that span reads GEGKT.

It belongs to the SecA family. In terms of assembly, monomer and homodimer. Part of the essential Sec protein translocation apparatus which comprises SecA, SecYEG and auxiliary proteins SecDF. Other proteins may also be involved.

It is found in the cell membrane. It localises to the cytoplasm. The enzyme catalyses ATP + H2O + cellular proteinSide 1 = ADP + phosphate + cellular proteinSide 2.. Part of the Sec protein translocase complex. Interacts with the SecYEG preprotein conducting channel. Has a central role in coupling the hydrolysis of ATP to the transfer of proteins into and across the cell membrane, serving as an ATP-driven molecular motor driving the stepwise translocation of polypeptide chains across the membrane. This Lactobacillus johnsonii (strain CNCM I-12250 / La1 / NCC 533) protein is Protein translocase subunit SecA 1.